Here is a 395-residue protein sequence, read N- to C-terminus: uncharacterized protein (395 aa).

The segment at 115 to 144 is disordered; it reads TKPPTEGGPEKDQSSPSQTQAAPQGPSTAS. Residues 128–141 are compositionally biased toward low complexity; sequence SSPSQTQAAPQGPS.

This is an uncharacterized protein from Homo sapiens (Human).